We begin with the raw amino-acid sequence, 1109 residues long: DNA mismatch repair protein MSH7 (1109 aa).

2 disordered regions span residues 19–45 and 61–86; these read TKGL…KEGD and DEVR…KPAE. The segment covering 61–74 has biased composition (basic and acidic residues); that stretch reads DEVRGTDTPPEKVP. ATP is bound at residue 853-860; the sequence is GPNMGGKS.

Belongs to the DNA mismatch repair MutS family. As to quaternary structure, heterodimer consisting of MSH2-MSH7 (MutS gamma).

The protein localises to the nucleus. Its function is as follows. Component of the post-replicative DNA mismatch repair system (MMR). Forms the heterodimer MutS gamma (MSH2-MSH7 heterodimer) which binds to DNA mismatches thereby initiating DNA repair. MutS gamma recognizes specifically the T/G single base mismatch, but not trinucleotide insertion-deletion loops (IDL). The protein is DNA mismatch repair protein MSH7 (MSH7) of Arabidopsis thaliana (Mouse-ear cress).